A 637-amino-acid chain; its full sequence is Threonine--tRNA ligase (637 aa).

Residues 1–61 (MPVITLPNGS…EQDAALSIVT (61 aa)) enclose the TGS domain. The tract at residues 242–533 (DHRKLGKKFD…LIENYEGAFP (292 aa)) is catalytic. Residues Cys333, His384, and His510 each coordinate Zn(2+).

This sequence belongs to the class-II aminoacyl-tRNA synthetase family. Homodimer. Requires Zn(2+) as cofactor.

The protein resides in the cytoplasm. It catalyses the reaction tRNA(Thr) + L-threonine + ATP = L-threonyl-tRNA(Thr) + AMP + diphosphate + H(+). Its function is as follows. Catalyzes the attachment of threonine to tRNA(Thr) in a two-step reaction: L-threonine is first activated by ATP to form Thr-AMP and then transferred to the acceptor end of tRNA(Thr). Also edits incorrectly charged L-seryl-tRNA(Thr). This chain is Threonine--tRNA ligase, found in Teredinibacter turnerae (strain ATCC 39867 / T7901).